Here is a 569-residue protein sequence, read N- to C-terminus: Glucose-6-phosphate isomerase, cytosolic 2 (569 aa).

The active-site Proton donor is the E360. Catalysis depends on residues H391 and K516.

The protein belongs to the GPI family. In terms of assembly, homodimer.

Its subcellular location is the cytoplasm. The catalysed reaction is alpha-D-glucose 6-phosphate = beta-D-fructose 6-phosphate. It functions in the pathway carbohydrate degradation; glycolysis; D-glyceraldehyde 3-phosphate and glycerone phosphate from D-glucose: step 2/4. The chain is Glucose-6-phosphate isomerase, cytosolic 2 (PGIC2) from Clarkia concinna (Red ribbons).